A 79-amino-acid chain; its full sequence is MGMSKSIKVIVSLALILFLALAATKVEATRYISYRGMNHGDHAIHCDKAHPNTCKKQVANPYRRGCGTIERCRRDTGRK.

The N-terminal stretch at 1 to 28 is a signal peptide; the sequence is MGMSKSIKVIVSLALILFLALAATKVEA. Cystine bridges form between C46/C54 and C66/C72.

Belongs to the plant rapid alkalinization factor (RALF) family.

The protein localises to the secreted. Functionally, cell signaling peptide that may regulate plant stress, growth, and development. Mediates a rapid alkalinization of extracellular space by mediating a transient increase in the cytoplasmic Ca(2+) concentration leading to a calcium-dependent signaling events through a cell surface receptor and a concomitant activation of some intracellular mitogen-activated protein kinases. The polypeptide is Protein RALF-like 15 (RALFL15) (Arabidopsis thaliana (Mouse-ear cress)).